The primary structure comprises 208 residues: NAD(P)H-hydrate epimerase (208 aa).

One can recognise a YjeF N-terminal domain in the interval 10-208; the sequence is IRDAERQTLA…TLGVIMTPAN (199 aa). Residue 54 to 58 participates in (6S)-NADPHX binding; it reads NNGGD. The K(+) site is built by Asn-55 and Asp-117. (6S)-NADPHX contacts are provided by residues 121–127 and Asp-150; that span reads GIGLNRP. Position 153 (Ser-153) interacts with K(+).

This sequence belongs to the NnrE/AIBP family. The cofactor is K(+).

It catalyses the reaction (6R)-NADHX = (6S)-NADHX. The catalysed reaction is (6R)-NADPHX = (6S)-NADPHX. Catalyzes the epimerization of the S- and R-forms of NAD(P)HX, a damaged form of NAD(P)H that is a result of enzymatic or heat-dependent hydration. This is a prerequisite for the S-specific NAD(P)H-hydrate dehydratase to allow the repair of both epimers of NAD(P)HX. This is NAD(P)H-hydrate epimerase from Achromobacter xylosoxidans (strain A8).